A 7031-amino-acid chain; its full sequence is Extracellular matrix-binding protein EbhB (7031 aa).

An N-terminal signal peptide occupies residues M1–A39. Polar residues predominate over residues E41–Q59. Disordered stretches follow at residues E41 to E86, K99 to N152, P250 to V277, N1342 to D1373, and T2418 to A2438. Low complexity predominate over residues S65–S80. Polar residues predominate over residues K99–N117. Basic and acidic residues predominate over residues P130–N140. 4 stretches are compositionally biased toward polar residues: residues E141–D151, P250–S266, F1360–D1373, and H2427–A2438. 38 FIVAR domains span residues A2524–A2580, S2610–E2666, D2687–A2750, A2780–E2836, A2864–N2919, A2947–N3002, A3030–K3085, A3154–K3212, A3280–A3339, A3407–A3465, A3533–A3591, A3659–K3717, A3785–A3843, A3911–A3969, A4037–A4095, A4163–A4221, Q4289–A4347, A4415–A4473, A4541–I4599, A4667–A4725, A4793–A4851, A4919–M4977, A5045–A5103, A5171–V5229, A5297–A5355, A5423–A5481, A5549–A5607, A5675–A5733, A5801–A5859, A5927–A5985, A6053–K6111, A6179–A6236, A6304–A6362, A6430–A6488, A6556–A6614, A6682–A6740, D6818–A6866, and A6934–A6992.

This is Extracellular matrix-binding protein EbhB (ebhB) from Staphylococcus aureus (strain Newman).